The following is a 103-amino-acid chain: Cytochrome c55X (103 aa).

A signal peptide spans 1–17 (MARLALLLVLLAGTAVA). Residues Cys-36, Cys-39, and His-40 each coordinate heme c.

Post-translationally, binds 1 heme c group covalently per subunit.

It is found in the periplasm. Monoheme c-type cytochrome. The sequence is that of Cytochrome c55X (nirC) from Paracoccus denitrificans (strain Pd 1222).